Here is a 192-residue protein sequence, read N- to C-terminus: UPF0301 protein Bmul_2524/BMULJ_00714 (192 aa).

It belongs to the UPF0301 (AlgH) family.

This Burkholderia multivorans (strain ATCC 17616 / 249) protein is UPF0301 protein Bmul_2524/BMULJ_00714.